A 394-amino-acid polypeptide reads, in one-letter code: Elongation factor Tu 2 (394 aa).

The tr-type G domain maps to 10 to 204; the sequence is KPHVNVGTIG…YLDTYIPEPE (195 aa). The segment at 19–26 is G1; the sequence is GHVDHGKT. A GTP-binding site is contributed by 19–26; that stretch reads GHVDHGKT. Threonine 26 lines the Mg(2+) pocket. The G2 stretch occupies residues 60-64; that stretch reads GITIN. A G3 region spans residues 81-84; that stretch reads DCPG. Residues 81–85 and 136–139 contribute to the GTP site; these read DCPGH and NKCD. The tract at residues 136-139 is G4; it reads NKCD. The segment at 174–176 is G5; that stretch reads SAL.

The protein belongs to the TRAFAC class translation factor GTPase superfamily. Classic translation factor GTPase family. EF-Tu/EF-1A subfamily. Monomer.

It is found in the cytoplasm. It catalyses the reaction GTP + H2O = GDP + phosphate + H(+). Its function is as follows. GTP hydrolase that promotes the GTP-dependent binding of aminoacyl-tRNA to the A-site of ribosomes during protein biosynthesis. This chain is Elongation factor Tu 2, found in Yersinia enterocolitica serotype O:8 / biotype 1B (strain NCTC 13174 / 8081).